The sequence spans 127 residues: NHP2-like protein 1 homolog (127 aa).

Belongs to the eukaryotic ribosomal protein eL8 family.

It is found in the nucleus. It localises to the nucleolus. In terms of biological role, binds to the 5'-stem-loop of U4 snRNA and may play a role in the late stage of spliceosome assembly. The protein undergoes a conformational change upon RNA-binding. The chain is NHP2-like protein 1 homolog (hoip) from Drosophila melanogaster (Fruit fly).